We begin with the raw amino-acid sequence, 89 residues long: Small ribosomal subunit protein uS17 (89 aa).

It belongs to the universal ribosomal protein uS17 family. In terms of assembly, part of the 30S ribosomal subunit.

Functionally, one of the primary rRNA binding proteins, it binds specifically to the 5'-end of 16S ribosomal RNA. The polypeptide is Small ribosomal subunit protein uS17 (Albidiferax ferrireducens (strain ATCC BAA-621 / DSM 15236 / T118) (Rhodoferax ferrireducens)).